The following is a 187-amino-acid chain: UPF0200 protein PYRAB09750 (187 aa).

7–14 (GMPGSGKG) is an ATP binding site.

This sequence belongs to the UPF0200 family.

The polypeptide is UPF0200 protein PYRAB09750 (Pyrococcus abyssi (strain GE5 / Orsay)).